A 150-amino-acid chain; its full sequence is Seminal ribonuclease (150 aa).

The signal sequence occupies residues 1–26; sequence MALKSLVVLPLLVLVLLLVRVQPSLG. The substrate site is built by K33 and R36. H38 (proton acceptor) is an active-site residue. 4 cysteine pairs are disulfide-bonded: C52–C110, C66–C121, C84–C136, and C91–C98. Substrate contacts are provided by residues 67 to 71 and K92; that span reads KPVNT. At N93 the chain carries Deamidated asparagine; by deterioration. R111 is a binding site for substrate. H145 serves as the catalytic Proton donor.

Belongs to the pancreatic ribonuclease family. As to quaternary structure, homodimer; disulfide-linked. As to expression, seminal plasma. Can reach 3% of the protein content of this fluid.

It is found in the secreted. The catalysed reaction is an [RNA] containing cytidine + H2O = an [RNA]-3'-cytidine-3'-phosphate + a 5'-hydroxy-ribonucleotide-3'-[RNA].. The enzyme catalyses an [RNA] containing uridine + H2O = an [RNA]-3'-uridine-3'-phosphate + a 5'-hydroxy-ribonucleotide-3'-[RNA].. Allosteric regulation by both substrate and reaction products. This enzyme hydrolyzes both single- and double-stranded RNA. In Bos taurus (Bovine), this protein is Seminal ribonuclease (SRN).